The chain runs to 885 residues: Leucine--tRNA ligase (885 aa).

Positions 48-58 (PYPSGKLHMGH) match the 'HIGH' region motif. Positions 639–643 (TMSKS) match the 'KMSKS' region motif. Lys642 is a binding site for ATP.

This sequence belongs to the class-I aminoacyl-tRNA synthetase family.

The protein resides in the cytoplasm. The enzyme catalyses tRNA(Leu) + L-leucine + ATP = L-leucyl-tRNA(Leu) + AMP + diphosphate. The chain is Leucine--tRNA ligase from Bordetella petrii (strain ATCC BAA-461 / DSM 12804 / CCUG 43448).